The following is a 106-amino-acid chain: Phosphoribosyl-ATP pyrophosphatase (106 aa).

It belongs to the PRA-PH family.

It localises to the cytoplasm. The catalysed reaction is 1-(5-phospho-beta-D-ribosyl)-ATP + H2O = 1-(5-phospho-beta-D-ribosyl)-5'-AMP + diphosphate + H(+). It functions in the pathway amino-acid biosynthesis; L-histidine biosynthesis; L-histidine from 5-phospho-alpha-D-ribose 1-diphosphate: step 2/9. This Methylobacillus flagellatus (strain ATCC 51484 / DSM 6875 / VKM B-1610 / KT) protein is Phosphoribosyl-ATP pyrophosphatase.